An 85-amino-acid polypeptide reads, in one-letter code: MAHKKGGGTTRNGRDSESKRLGVKVYGGQAINAGGIIVRQRGTKMHPGENVGIGKDHTLFALTDGKVAFVTKGALQRHYVTVVPA.

The disordered stretch occupies residues 1–21 (MAHKKGGGTTRNGRDSESKRL).

Belongs to the bacterial ribosomal protein bL27 family.

This Janthinobacterium sp. (strain Marseille) (Minibacterium massiliensis) protein is Large ribosomal subunit protein bL27.